A 583-amino-acid chain; its full sequence is Laccase-14 (583 aa).

The N-terminal stretch at 1 to 30 is a signal peptide; the sequence is MAPSLGSGSTRILLIVSLLLCLRQQAVVDA. 2 consecutive Plastocyanin-like domains span residues 38 to 158 and 168 to 320; these read HVGN…PRPG and AEHT…YDDD. 2 N-linked (GlcNAc...) asparagine glycosylation sites follow: Asn-41 and Asn-84. Cu cation contacts are provided by His-88 and His-90. A glycan (N-linked (GlcNAc...) asparagine) is linked at Asn-126. Cu cation-binding residues include His-137 and His-139. Asn-179, Asn-251, Asn-304, Asn-338, Asn-388, Asn-400, Asn-446, and Asn-464 each carry an N-linked (GlcNAc...) asparagine glycan. Residues 426–567 enclose the Plastocyanin-like 3 domain; the sequence is DFPDRPPVMF…AMAFDVQDGP (142 aa). 7 residues coordinate Cu cation: His-482, His-485, His-487, His-546, Cys-547, His-548, and His-552.

Belongs to the multicopper oxidase family. Requires Cu cation as cofactor.

Its subcellular location is the secreted. The protein resides in the extracellular space. The protein localises to the apoplast. The catalysed reaction is 4 hydroquinone + O2 = 4 benzosemiquinone + 2 H2O. Its function is as follows. Lignin degradation and detoxification of lignin-derived products. In Oryza sativa subsp. japonica (Rice), this protein is Laccase-14 (LAC14).